A 559-amino-acid chain; its full sequence is Probable 2-ketoarginine decarboxylase AruI (559 aa).

Glutamate 76 contributes to the thiamine diphosphate binding site.

Belongs to the TPP enzyme family. The cofactor is thiamine diphosphate.

The enzyme catalyses 5-guanidino-2-oxopentanoate + H(+) = 4-guanidinobutanal + CO2. It participates in amino-acid degradation; L-arginine degradation. Catalyzes the decarboxylation of 2-ketoarginine, leading to the formation of 4-guanidinobutyraldehyde. The polypeptide is Probable 2-ketoarginine decarboxylase AruI (aruI) (Pseudomonas aeruginosa (strain ATCC 15692 / DSM 22644 / CIP 104116 / JCM 14847 / LMG 12228 / 1C / PRS 101 / PAO1)).